Reading from the N-terminus, the 298-residue chain is Bifunctional protein FolD (298 aa).

NADP(+) contacts are provided by residues 165–167 (GRS), Ser190, and Ile231.

Belongs to the tetrahydrofolate dehydrogenase/cyclohydrolase family. Homodimer.

It carries out the reaction (6R)-5,10-methylene-5,6,7,8-tetrahydrofolate + NADP(+) = (6R)-5,10-methenyltetrahydrofolate + NADPH. The enzyme catalyses (6R)-5,10-methenyltetrahydrofolate + H2O = (6R)-10-formyltetrahydrofolate + H(+). Its pathway is one-carbon metabolism; tetrahydrofolate interconversion. Catalyzes the oxidation of 5,10-methylenetetrahydrofolate to 5,10-methenyltetrahydrofolate and then the hydrolysis of 5,10-methenyltetrahydrofolate to 10-formyltetrahydrofolate. In Prochlorococcus marinus (strain AS9601), this protein is Bifunctional protein FolD.